A 66-amino-acid chain; its full sequence is Brevinin-1DYb (66 aa).

The N-terminal stretch at methionine 1–cysteine 22 is a signal peptide. Residues glutamate 23–glutamate 44 constitute a propeptide that is removed on maturation. Cysteine 60 and cysteine 66 are oxidised to a cystine.

As to expression, expressed by the skin glands.

The protein localises to the secreted. Functionally, antimicrobial peptide. Has low activity against the Gram-positive bacterium S.aureus and the Gram-negative bacterium E.coli (MIC&lt;15 uM). Has a strong hemolytic activity. In Rana dybowskii (Dybovsky's frog), this protein is Brevinin-1DYb.